Here is a 221-residue protein sequence, read N- to C-terminus: uncharacterized protein (221 aa).

Residues 77 to 96 (YRERAVELGVPERAILVEPN) constitute a DNA-binding region (H-T-H motif).

To E.coli YdcF.

The imp locus inhibits the extrachromosomal maintenance of the streptomyces plasmid SLP1. May function as a transcriptional activator. This is an uncharacterized protein from Streptomyces coelicolor (strain ATCC BAA-471 / A3(2) / M145).